Reading from the N-terminus, the 125-residue chain is Large ribosomal subunit protein bL19 (125 aa).

It belongs to the bacterial ribosomal protein bL19 family.

Its function is as follows. This protein is located at the 30S-50S ribosomal subunit interface and may play a role in the structure and function of the aminoacyl-tRNA binding site. The chain is Large ribosomal subunit protein bL19 from Wolbachia sp. subsp. Brugia malayi (strain TRS).